Consider the following 241-residue polypeptide: Probable septum site-determining protein MinC (241 aa).

The segment at 109-135 (PSGARERKVDPSSKTPAKPAEPTYRPT) is disordered.

Belongs to the MinC family. In terms of assembly, interacts with MinD and FtsZ.

Its function is as follows. Cell division inhibitor that blocks the formation of polar Z ring septums. Rapidly oscillates between the poles of the cell to destabilize FtsZ filaments that have formed before they mature into polar Z rings. Prevents FtsZ polymerization. The protein is Probable septum site-determining protein MinC of Stutzerimonas stutzeri (strain A1501) (Pseudomonas stutzeri).